The primary structure comprises 309 residues: Tagatose-6-phosphate kinase (309 aa).

The protein belongs to the carbohydrate kinase PfkB family. LacC subfamily.

The catalysed reaction is D-tagatofuranose 6-phosphate + ATP = D-tagatofuranose 1,6-bisphosphate + ADP + H(+). It participates in carbohydrate metabolism; D-tagatose 6-phosphate degradation; D-glyceraldehyde 3-phosphate and glycerone phosphate from D-tagatose 6-phosphate: step 1/2. The chain is Tagatose-6-phosphate kinase from Streptococcus pyogenes serotype M1.